A 470-amino-acid chain; its full sequence is ATP synthase subunit beta (470 aa).

155–162 (GGAGVGKT) lines the ATP pocket.

This sequence belongs to the ATPase alpha/beta chains family. F-type ATPases have 2 components, CF(1) - the catalytic core - and CF(0) - the membrane proton channel. CF(1) has five subunits: alpha(3), beta(3), gamma(1), delta(1), epsilon(1). CF(0) has three main subunits: a(1), b(2) and c(9-12). The alpha and beta chains form an alternating ring which encloses part of the gamma chain. CF(1) is attached to CF(0) by a central stalk formed by the gamma and epsilon chains, while a peripheral stalk is formed by the delta and b chains.

The protein localises to the cell inner membrane. It catalyses the reaction ATP + H2O + 4 H(+)(in) = ADP + phosphate + 5 H(+)(out). Its function is as follows. Produces ATP from ADP in the presence of a proton gradient across the membrane. The catalytic sites are hosted primarily by the beta subunits. The chain is ATP synthase subunit beta from Oleidesulfovibrio alaskensis (strain ATCC BAA-1058 / DSM 17464 / G20) (Desulfovibrio alaskensis).